The following is a 510-amino-acid chain: GMP synthase [glutamine-hydrolyzing] (510 aa).

The 191-residue stretch at 5–195 folds into the Glutamine amidotransferase type-1 domain; sequence LVIVVDFGGQ…LYEICKADGD (191 aa). The active-site Nucleophile is Cys82. Active-site residues include His169 and Glu171. Residues 196-385 form the GMPS ATP-PPase domain; the sequence is WTMENFLEEQ…LEMPEYLVYR (190 aa). An ATP-binding site is contributed by 223-229; the sequence is SGGVDSS.

As to quaternary structure, homodimer.

The catalysed reaction is XMP + L-glutamine + ATP + H2O = GMP + L-glutamate + AMP + diphosphate + 2 H(+). Its pathway is purine metabolism; GMP biosynthesis; GMP from XMP (L-Gln route): step 1/1. Functionally, catalyzes the synthesis of GMP from XMP. The protein is GMP synthase [glutamine-hydrolyzing] of Finegoldia magna (strain ATCC 29328 / DSM 20472 / WAL 2508) (Peptostreptococcus magnus).